The chain runs to 353 residues: Chorismate synthase (353 aa).

Arginine 48 contacts NADP(+). Residues 128-130 (RAS), glycine 280, 295-299 (KPIPS), and arginine 321 contribute to the FMN site.

This sequence belongs to the chorismate synthase family. As to quaternary structure, homotetramer. It depends on FMNH2 as a cofactor.

The catalysed reaction is 5-O-(1-carboxyvinyl)-3-phosphoshikimate = chorismate + phosphate. The protein operates within metabolic intermediate biosynthesis; chorismate biosynthesis; chorismate from D-erythrose 4-phosphate and phosphoenolpyruvate: step 7/7. Its function is as follows. Catalyzes the anti-1,4-elimination of the C-3 phosphate and the C-6 proR hydrogen from 5-enolpyruvylshikimate-3-phosphate (EPSP) to yield chorismate, which is the branch point compound that serves as the starting substrate for the three terminal pathways of aromatic amino acid biosynthesis. This reaction introduces a second double bond into the aromatic ring system. The sequence is that of Chorismate synthase from Nitratidesulfovibrio vulgaris (strain DSM 19637 / Miyazaki F) (Desulfovibrio vulgaris).